A 275-amino-acid polypeptide reads, in one-letter code: Small ribosomal subunit protein uS3 (275 aa).

The region spanning Ile38–Lys106 is the KH type-2 domain. Residues Asn216–Gly228 are compositionally biased toward low complexity. The interval Asn216–Ala275 is disordered. Basic and acidic residues predominate over residues Gly229 to Gly244. Low complexity predominate over residues Pro249 to Ala268.

This sequence belongs to the universal ribosomal protein uS3 family. Part of the 30S ribosomal subunit. Forms a tight complex with proteins S10 and S14.

Binds the lower part of the 30S subunit head. Binds mRNA in the 70S ribosome, positioning it for translation. In Streptomyces avermitilis (strain ATCC 31267 / DSM 46492 / JCM 5070 / NBRC 14893 / NCIMB 12804 / NRRL 8165 / MA-4680), this protein is Small ribosomal subunit protein uS3.